Here is a 389-residue protein sequence, read N- to C-terminus: 2-deoxystreptamine N-acetyl-D-glucosaminyltransferase (389 aa).

This sequence belongs to the glycosyltransferase group 1 family.

It catalyses the reaction 2-deoxystreptamine + UDP-N-acetyl-alpha-D-glucosamine = 2'-N-acetylparomamine + UDP + H(+). It functions in the pathway antibiotic biosynthesis; butirosin biosynthesis. Glycosyltransferase involved in the biosynthesis of butirosin by mediating conversion of 2-deoxystreptamine (2-DOS) to 2'-N-acetylparomamine using UDP-alpha-D-glucosamine as sugar donor. The chain is 2-deoxystreptamine N-acetyl-D-glucosaminyltransferase (btrM) from Niallia circulans (Bacillus circulans).